The sequence spans 131 residues: Con-Ins Q1 (131 aa).

The first 24 residues, 1 to 24 (MTTSSYFLLVALGLLLYLCQSSFG), serve as a signal peptide directing secretion. 4 disulfide bridges follow: Cys29–Cys107, Cys41–Cys110, Cys53–Cys123, and Cys109–Cys114. Residues 59 to 92 (LQGGTDDARKKRGRASLLRKRRGFLSMLKARAKR) constitute a propeptide, c peptide. Residue Glu118 is modified to 4-carboxyglutamate; partial. Position 130 is a serine amide (Ser130).

Belongs to the insulin family. Heterodimer of A and B chains; disulfide-linked. Expressed by the venom gland.

It is found in the secreted. Its function is as follows. This venom insulin facilitates prey capture by rapidly inducing hypoglycemic shock. Intraperitoneal injection of this peptide into zebrafish lowers blood glucose with the same potency than human insulin. In vivo, when applied to water, this peptide reduces overall locomotor activity of zebrafish larvae, observed as a significant decrease in the percentage of time spent swimming and movement frequency. The chain is Con-Ins Q1 from Conus quercinus (Oak cone).